A 186-amino-acid polypeptide reads, in one-letter code: uncharacterized protein (186 aa).

The segment at 156 to 186 (DTKELERTTQPPEHQKHHQEPREKRGMNKRD) is disordered. A compositionally biased stretch (basic and acidic residues) spans 173–186 (HQEPREKRGMNKRD).

This is an uncharacterized protein from Bacillus subtilis (strain 168).